Here is a 629-residue protein sequence, read N- to C-terminus: Ribosomal protein S6 kinase 2 beta (629 aa).

The Protein kinase 1 domain maps to 62–321; it reads FVLLKVLGQG…AEELKRHPFF (260 aa). ATP contacts are provided by residues 68–76 and K94; that span reads LGQGSFGKV. Residue D187 is the Proton acceptor of the active site. S221 is subject to Phosphoserine. The region spanning 322–391 is the AGC-kinase C-terminal domain; it reads STIDWNKLYR…VAPVLVEEDA (70 aa). Phosphothreonine is present on T359. S363 carries the phosphoserine modification. The residue at position 380 (S380) is a Phosphoserine; by autocatalysis. A Protein kinase 2 domain is found at 416 to 629; the sequence is YTVRETIGVG…PEEILARIGS (214 aa). ATP is bound by residues 422–430 and K445; that span reads IGVGSYSVC. The active-site Proton acceptor is D533. T571 carries the phosphothreonine modification.

It belongs to the protein kinase superfamily. AGC Ser/Thr protein kinase family. S6 kinase subfamily. It depends on Mg(2+) as a cofactor. Post-translationally, autophosphorylated on Ser-380, as part of the activation process.

The catalysed reaction is L-seryl-[protein] + ATP = O-phospho-L-seryl-[protein] + ADP + H(+). The enzyme catalyses L-threonyl-[protein] + ATP = O-phospho-L-threonyl-[protein] + ADP + H(+). Its activity is regulated as follows. Activated by multiple phosphorylations on threonine and serine residues. Its function is as follows. Serine/threonine kinase that may play a role in mediating the growth-factor and stress induced activation of transcription. This chain is Ribosomal protein S6 kinase 2 beta, found in Xenopus laevis (African clawed frog).